The chain runs to 397 residues: T-box transcription factor TBX19 (397 aa).

A DNA-binding region (T-box) is located at residues 48–216 (LWQRFREVTN…YNPFAKAFLD (169 aa)). The disordered stretch occupies residues 220-248 (RNHPKDAPEAASEGQHMTYSHSPQAPHGC).

The protein localises to the nucleus. Its function is as follows. May be involved in the initial formation of the chordamesoderm. This Gallus gallus (Chicken) protein is T-box transcription factor TBX19.